Consider the following 192-residue polypeptide: MEFIVEKIGMSRTIGTKSEAVTLLRVLGAKVCEIYDNGKALVAYSQGKSVNKAIAGQQKKYSLSKEFNRFATLKVSNKEVGELDVASLSEAKRVQVSFKTKGRGFSGAMKRWNFQGGPGAHGSRFHRRLGSIGNREWPGRVQPGKKMAGHYGNELVSAKNDIMSFDKQSAILVLKGSVAGFNGAFGRIQIIK.

Belongs to the universal ribosomal protein uL3 family. In terms of assembly, part of the 50S ribosomal subunit. Forms a cluster with proteins L14 and L19.

Its function is as follows. One of the primary rRNA binding proteins, it binds directly near the 3'-end of the 23S rRNA, where it nucleates assembly of the 50S subunit. This Helicobacter hepaticus (strain ATCC 51449 / 3B1) protein is Large ribosomal subunit protein uL3 (rplC).